A 208-amino-acid polypeptide reads, in one-letter code: Dual specificity protein phosphatase 22-A (208 aa).

The Tyrosine-protein phosphatase domain occupies 4–144 (GMNKVIDGLY…LQEFQMKQVS (141 aa)). The Phosphocysteine intermediate role is filled by Cys-88.

The protein belongs to the protein-tyrosine phosphatase family. Non-receptor class dual specificity subfamily.

Its subcellular location is the cytoplasm. The protein resides in the nucleus. It carries out the reaction O-phospho-L-tyrosyl-[protein] + H2O = L-tyrosyl-[protein] + phosphate. The enzyme catalyses O-phospho-L-seryl-[protein] + H2O = L-seryl-[protein] + phosphate. The catalysed reaction is O-phospho-L-threonyl-[protein] + H2O = L-threonyl-[protein] + phosphate. In terms of biological role, activates the Jnk signaling pathway. Dephosphorylates and deactivates p38 and stress-activated protein kinase/c-Jun N-terminal kinase (SAPK/JNK). The protein is Dual specificity protein phosphatase 22-A of Danio rerio (Zebrafish).